Here is a 1479-residue protein sequence, read N- to C-terminus: Protein CHROMATIN REMODELING 20 (1479 aa).

The stretch at 19–49 (EVIVESKEDEMDIIIEENREAEQEVMEVKAR) forms a coiled coil. The segment covering 40–55 (EQEVMEVKARDGRGEQ) has biased composition (basic and acidic residues). Positions 40–109 (EQEVMEVKAR…DELDLEKPLS (70 aa)) are disordered. Residues 76 to 86 (DASSRSESSDF) show a composition bias toward low complexity. Residues 94-109 (ILSRRDDELDLEKPLS) show a composition bias toward basic and acidic residues. Residues 109–199 (SEEEIDELIS…EQLDGAGIEL (91 aa)) adopt a coiled-coil conformation. An ADD domain is found at 472-601 (RDDSQNPANN…KKSIELSSDS (130 aa)). A GATA-type; atypical zinc finger spans residues 483-514 (RCTACNKVAVEVHSHPLLEVIVCMDCKRSIED). The segment at 524–577 (ERHCEWCGHIADLIDCRTCEKLFCASCIKRNIGEEYMSEAQSSGWDCCCCSPIP) adopts a PHD-type; atypical zinc-finger fold. Residues 578-598 (LQRLTLELEKAMRDKKSIELS) are a coiled coil. The interval 594–615 (SIELSSDSSSDSSSDNNSVDTD) is disordered. Low complexity predominate over residues 598 to 615 (SSDSSSDSSSDNNSVDTD). The 184-residue stretch at 741–924 (VKSGDKGLGC…YCMVDFVREG (184 aa)) folds into the Helicase ATP-binding domain. 754-761 (HTMGLGKT) serves as a coordination point for ATP. Residues 875-878 (DEAH) carry the DEAH box motif. In terms of domain architecture, Helicase C-terminal spans 1122-1290 (DILSMSADVG…QVHRTISKEE (169 aa)). Positions 1400–1423 (SESPVVPKPSPSTQTEPLPQPKGF) are disordered.

Belongs to the SNF2/RAD54 helicase family.

It is found in the nucleus. The protein resides in the chromosome. It localises to the telomere. Functionally, involved in transcriptional regulation and chromatin remodeling. Facilitates DNA replication in multiple cellular environments and is required for efficient replication of a subset of genomic loci. Binds to DNA tandem repeat sequences in both telomeres and euchromatin and in vitro binds DNA quadruplex structures. May help stabilizing G-rich regions into regular chromatin structures by remodeling G4 DNA and incorporating H3.3-containing nucleosomes. Involved in DNA repair of gamma-irradiation-mediated damages. The protein is Protein CHROMATIN REMODELING 20 of Arabidopsis thaliana (Mouse-ear cress).